We begin with the raw amino-acid sequence, 262 residues long: Hydroxyethylthiazole kinase (262 aa).

Residue Met43 participates in substrate binding. ATP is bound by residues Arg118 and Thr164. A substrate-binding site is contributed by Ala191.

Belongs to the Thz kinase family. Mg(2+) is required as a cofactor.

It catalyses the reaction 5-(2-hydroxyethyl)-4-methylthiazole + ATP = 4-methyl-5-(2-phosphooxyethyl)-thiazole + ADP + H(+). It functions in the pathway cofactor biosynthesis; thiamine diphosphate biosynthesis; 4-methyl-5-(2-phosphoethyl)-thiazole from 5-(2-hydroxyethyl)-4-methylthiazole: step 1/1. Catalyzes the phosphorylation of the hydroxyl group of 4-methyl-5-beta-hydroxyethylthiazole (THZ). The polypeptide is Hydroxyethylthiazole kinase (Cereibacter sphaeroides (strain KD131 / KCTC 12085) (Rhodobacter sphaeroides)).